We begin with the raw amino-acid sequence, 86 residues long: Beta-toxin CsEI (86 aa).

An N-terminal signal peptide occupies residues 1–19; that stretch reads MNSLLMITACLVLIGTVWA. The LCN-type CS-alpha/beta domain maps to 20–84; it reads KDGYLVEKTG…TWPLPNKTCG (65 aa). 4 disulfides stabilise this stretch: cysteine 30-cysteine 83, cysteine 34-cysteine 59, cysteine 43-cysteine 64, and cysteine 47-cysteine 66. Cysteine amide is present on cysteine 83.

The protein belongs to the long (4 C-C) scorpion toxin superfamily. Sodium channel inhibitor family. Beta subfamily. As to expression, expressed by the venom gland.

It is found in the secreted. Functionally, beta toxins bind voltage-independently at site-4 of sodium channels (Nav) and shift the voltage of activation toward more negative potentials thereby affecting sodium channel activation and promoting spontaneous and repetitive firing. Affects channels from chicken and frog. The protein is Beta-toxin CsEI of Centruroides sculpturatus (Arizona bark scorpion).